The primary structure comprises 246 residues: Ribosomal RNA small subunit methyltransferase J (246 aa).

S-adenosyl-L-methionine is bound by residues 115–116 (ER) and Asp-169.

This sequence belongs to the methyltransferase superfamily. RsmJ family.

The protein localises to the cytoplasm. It catalyses the reaction guanosine(1516) in 16S rRNA + S-adenosyl-L-methionine = N(2)-methylguanosine(1516) in 16S rRNA + S-adenosyl-L-homocysteine + H(+). Functionally, specifically methylates the guanosine in position 1516 of 16S rRNA. The sequence is that of Ribosomal RNA small subunit methyltransferase J from Buchnera aphidicola subsp. Acyrthosiphon pisum (strain 5A).